Reading from the N-terminus, the 200-residue chain is GTP-binding protein ypt2 (200 aa).

Position 16-23 (16-23 (GDSGVGKS)) interacts with GTP. The Effector region motif lies at 38–46 (FITTIGIDF). GTP contacts are provided by residues 64–68 (DTAGQ) and 122–125 (NKCD). Residues cysteine 199 and cysteine 200 are each lipidated (S-geranylgeranyl cysteine).

Belongs to the small GTPase superfamily. Rab family.

It is found in the cell membrane. Functionally, protein transport. Probably involved in vesicular traffic. This is GTP-binding protein ypt2 (ypt2) from Schizosaccharomyces pombe (strain 972 / ATCC 24843) (Fission yeast).